We begin with the raw amino-acid sequence, 470 residues long: MKTLYDKLWSDHVVHAESDDPNGMVILYIDRHLVHEVTSPQAFESLKLAGRKPWRTGSILAVADHNVPTTDRSSGISDPVSRLQVETLDQNCEEFAITEFRMNDERQGIVHVIGPEQGATLPGMTVVCGDSHTSTHGAFACLAFGIGTSEVEHVLATQCLVARKSKTMLVRVEGDLPPGVTAKDIALAVIGEIGTAGGTGYAIEFAGSAIRSLSMEGRMTLCNMAIEAGARAGMVGADEVTIDYIKGRPFAPQGALWDQAVAYWRTLKSDEDAVFDRMVELKAVNIKPQVTWGTSPEMVTTVDGYVPDPADISDPTKRHDVEHALGYMGLKPKMPIQEITLDKVFIGSCTNSRIEDLRAAAEIVKGKRIAPNIRLAMVVPGSGLVKSMAEKEGLDKIFLSAGFEWREPGCSMCLAMNDDRLLPGERCASTSNRNFEGRQGPGGRTHLVSPAMAAAAAIAGHFVDVRSFIR.

[4Fe-4S] cluster contacts are provided by Cys349, Cys410, and Cys413.

The protein belongs to the aconitase/IPM isomerase family. LeuC type 1 subfamily. In terms of assembly, heterodimer of LeuC and LeuD. It depends on [4Fe-4S] cluster as a cofactor.

It carries out the reaction (2R,3S)-3-isopropylmalate = (2S)-2-isopropylmalate. The protein operates within amino-acid biosynthesis; L-leucine biosynthesis; L-leucine from 3-methyl-2-oxobutanoate: step 2/4. Functionally, catalyzes the isomerization between 2-isopropylmalate and 3-isopropylmalate, via the formation of 2-isopropylmaleate. The polypeptide is 3-isopropylmalate dehydratase large subunit (Nitrosomonas europaea (strain ATCC 19718 / CIP 103999 / KCTC 2705 / NBRC 14298)).